A 480-amino-acid chain; its full sequence is Aspartyl/glutamyl-tRNA(Asn/Gln) amidotransferase subunit B (480 aa).

It belongs to the GatB/GatE family. GatB subfamily. In terms of assembly, heterotrimer of A, B and C subunits.

The catalysed reaction is L-glutamyl-tRNA(Gln) + L-glutamine + ATP + H2O = L-glutaminyl-tRNA(Gln) + L-glutamate + ADP + phosphate + H(+). The enzyme catalyses L-aspartyl-tRNA(Asn) + L-glutamine + ATP + H2O = L-asparaginyl-tRNA(Asn) + L-glutamate + ADP + phosphate + 2 H(+). Functionally, allows the formation of correctly charged Asn-tRNA(Asn) or Gln-tRNA(Gln) through the transamidation of misacylated Asp-tRNA(Asn) or Glu-tRNA(Gln) in organisms which lack either or both of asparaginyl-tRNA or glutaminyl-tRNA synthetases. The reaction takes place in the presence of glutamine and ATP through an activated phospho-Asp-tRNA(Asn) or phospho-Glu-tRNA(Gln). In Streptococcus thermophilus (strain ATCC BAA-250 / LMG 18311), this protein is Aspartyl/glutamyl-tRNA(Asn/Gln) amidotransferase subunit B.